A 585-amino-acid polypeptide reads, in one-letter code: Switch-associated protein 70 (585 aa).

The PH domain occupies 210–306 (DVLKQGYMMK…WIQAIYSTIH (97 aa)). A coiled-coil region spans residues 316 to 529 (HKEARQRRKE…VKKKLEMATH (214 aa)). The disordered stretch occupies residues 347–373 (ANENKQQELESVRKKLEEAASRAADEE). Over residues 351–373 (KQQELESVRKKLEEAASRAADEE) the composition is skewed to basic and acidic residues.

As to quaternary structure, the SWAP complex consists of NPM1, NCL, PARP1 and SWAP70. In terms of processing, tyrosine-phosphorylated. In terms of tissue distribution, spleen. Expressed only in B-cells that have been induced to switch to various Ig isotypes.

The protein localises to the cytoplasm. It localises to the cell membrane. The protein resides in the nucleus. Its subcellular location is the cell projection. It is found in the lamellipodium. The protein localises to the cytoskeleton. Functionally, phosphatidylinositol 3,4,5-trisphosphate-dependent guanine nucleotide exchange factor (GEF) which, independently of RAS, transduces signals from tyrosine kinase receptors to RAC. It also mediates signaling of membrane ruffling. Regulates the actin cytoskeleton as an effector or adapter protein in response to agonist stimulated phosphatidylinositol (3,4)-bisphosphate production and cell protrusion. In Mus musculus (Mouse), this protein is Switch-associated protein 70 (Swap70).